A 113-amino-acid chain; its full sequence is MHEFGITQNIVAIVTEHAKGAKVQRVLLEIGKLSAIMPDAIRFCFDICTQGTVLEGATLEILEIPGLGRCRQCGGEIYLDKPFGICNCGSVQLDLITGEELKIKEIEIEELCV.

Histidine 2 is a Ni(2+) binding site. The Zn(2+) site is built by cysteine 70, cysteine 73, cysteine 86, and cysteine 88.

This sequence belongs to the HypA/HybF family.

Involved in the maturation of [NiFe] hydrogenases. Required for nickel insertion into the metal center of the hydrogenase. This is Hydrogenase maturation factor HypA from Nostoc punctiforme (strain ATCC 29133 / PCC 73102).